The chain runs to 513 residues: ATP synthase subunit alpha (513 aa).

169–176 (GDRQIGKT) serves as a coordination point for ATP.

The protein belongs to the ATPase alpha/beta chains family. In terms of assembly, F-type ATPases have 2 components, CF(1) - the catalytic core - and CF(0) - the membrane proton channel. CF(1) has five subunits: alpha(3), beta(3), gamma(1), delta(1), epsilon(1). CF(0) has three main subunits: a(1), b(2) and c(9-12). The alpha and beta chains form an alternating ring which encloses part of the gamma chain. CF(1) is attached to CF(0) by a central stalk formed by the gamma and epsilon chains, while a peripheral stalk is formed by the delta and b chains.

It is found in the cell inner membrane. The catalysed reaction is ATP + H2O + 4 H(+)(in) = ADP + phosphate + 5 H(+)(out). In terms of biological role, produces ATP from ADP in the presence of a proton gradient across the membrane. The alpha chain is a regulatory subunit. The chain is ATP synthase subunit alpha from Shewanella woodyi (strain ATCC 51908 / MS32).